The sequence spans 355 residues: UDP-3-O-acylglucosamine N-acyltransferase (355 aa).

H252 acts as the Proton acceptor in catalysis.

It belongs to the transferase hexapeptide repeat family. LpxD subfamily. In terms of assembly, homotrimer.

The enzyme catalyses a UDP-3-O-[(3R)-3-hydroxyacyl]-alpha-D-glucosamine + a (3R)-hydroxyacyl-[ACP] = a UDP-2-N,3-O-bis[(3R)-3-hydroxyacyl]-alpha-D-glucosamine + holo-[ACP] + H(+). It functions in the pathway bacterial outer membrane biogenesis; LPS lipid A biosynthesis. Functionally, catalyzes the N-acylation of UDP-3-O-acylglucosamine using 3-hydroxyacyl-ACP as the acyl donor. Is involved in the biosynthesis of lipid A, a phosphorylated glycolipid that anchors the lipopolysaccharide to the outer membrane of the cell. The protein is UDP-3-O-acylglucosamine N-acyltransferase of Polynucleobacter asymbioticus (strain DSM 18221 / CIP 109841 / QLW-P1DMWA-1) (Polynucleobacter necessarius subsp. asymbioticus).